The following is a 249-amino-acid chain: Ribonuclease 3 (249 aa).

Residues F20 to G149 enclose the RNase III domain. E62 is a binding site for Mg(2+). Residue D66 is part of the active site. Mg(2+) contacts are provided by D135 and E138. E138 is an active-site residue. Positions D175–K244 constitute a DRBM domain. Residues N223 to Q249 are disordered.

This sequence belongs to the ribonuclease III family. In terms of assembly, homodimer. Requires Mg(2+) as cofactor.

The protein localises to the cytoplasm. The catalysed reaction is Endonucleolytic cleavage to 5'-phosphomonoester.. Functionally, digests double-stranded RNA. Involved in the processing of primary rRNA transcript to yield the immediate precursors to the large and small rRNAs (23S and 16S). Processes some mRNAs, and tRNAs when they are encoded in the rRNA operon. Processes pre-crRNA and tracrRNA of type II CRISPR loci if present in the organism. This Bacillus velezensis (strain DSM 23117 / BGSC 10A6 / LMG 26770 / FZB42) (Bacillus amyloliquefaciens subsp. plantarum) protein is Ribonuclease 3.